A 360-amino-acid polypeptide reads, in one-letter code: MKPSIVAKLEALHERHEEVQALLGDAGIIADQDRFRALSREYAQLSDVSRCFTDWQQVQDDIETAQMMLDDPEMREMAQEELREAKEKSEQLEQQLQVLLLPKDPDDERNAFLEVRAGTGGDEAALFAGDLFRMYSRYAEARRWRVEIMSMSEGEHGGYKEIIAKISGDGVYGRLKFESGGHRVQRVPATESQGRIHTSACTVAVMPELPEAELPDINPADLRIDTFRSSGAGGQHVNTTDSSIRITHLPTGIVVECQDERSQHKNKAKALSVLGARIHAAETAKRQQAEASTRRNLLGSGDRSDRNRTYNFPQGRVTDHRINLTLYRLDETMEGKLDMLIEPIVQEHQADLLAALSEQE.

The residue at position 235 (Gln-235) is an N5-methylglutamine. Residues 285–313 are disordered; that stretch reads KRQQAEASTRRNLLGSGDRSDRNRTYNFP.

Belongs to the prokaryotic/mitochondrial release factor family. Methylated by PrmC. Methylation increases the termination efficiency of RF1.

It is found in the cytoplasm. Its function is as follows. Peptide chain release factor 1 directs the termination of translation in response to the peptide chain termination codons UAG and UAA. The polypeptide is Peptide chain release factor 1 (Salmonella paratyphi A (strain ATCC 9150 / SARB42)).